The following is a 264-amino-acid chain: Phosphonoacetaldehyde hydrolase (264 aa).

The active-site Nucleophile is the Asp-9. Asp-9 and Ala-11 together coordinate Mg(2+). Lys-50 (schiff-base intermediate with substrate) is an active-site residue. Asp-183 provides a ligand contact to Mg(2+).

The protein belongs to the HAD-like hydrolase superfamily. PhnX family. As to quaternary structure, homodimer. The cofactor is Mg(2+).

It carries out the reaction phosphonoacetaldehyde + H2O = acetaldehyde + phosphate + H(+). Involved in phosphonate degradation. The sequence is that of Phosphonoacetaldehyde hydrolase from Bacillus cereus (strain ZK / E33L).